The chain runs to 513 residues: ATP synthase subunit alpha (513 aa).

169–176 (GDRQIGKT) provides a ligand contact to ATP.

Belongs to the ATPase alpha/beta chains family. F-type ATPases have 2 components, CF(1) - the catalytic core - and CF(0) - the membrane proton channel. CF(1) has five subunits: alpha(3), beta(3), gamma(1), delta(1), epsilon(1). CF(0) has three main subunits: a(1), b(2) and c(9-12). The alpha and beta chains form an alternating ring which encloses part of the gamma chain. CF(1) is attached to CF(0) by a central stalk formed by the gamma and epsilon chains, while a peripheral stalk is formed by the delta and b chains.

Its subcellular location is the cell inner membrane. It catalyses the reaction ATP + H2O + 4 H(+)(in) = ADP + phosphate + 5 H(+)(out). Produces ATP from ADP in the presence of a proton gradient across the membrane. The alpha chain is a regulatory subunit. This Francisella tularensis subsp. mediasiatica (strain FSC147) protein is ATP synthase subunit alpha.